A 218-amino-acid polypeptide reads, in one-letter code: Variable small protein 8 (218 aa).

The signal sequence occupies residues 1–18 (MRKRISAIIMTLFMVFMS). Residue C19 is the site of N-palmitoyl cysteine attachment. A lipid anchor (S-diacylglycerol cysteine) is attached at C19.

This sequence belongs to the variable small protein (Vsp) family.

It localises to the cell outer membrane. In terms of biological role, the Vlp and Vsp proteins are antigenically distinct proteins, only one vlp or vsp gene is transcriptionally active at any one time. Switching between these genes is a mechanism of host immune response evasion. The polypeptide is Variable small protein 8 (Borrelia hermsii).